Consider the following 77-residue polypeptide: Small integral membrane protein 5 (77 aa).

A helical membrane pass occupies residues 32–52; the sequence is IVAFSVIILFTATVLLLLLIA.

The protein localises to the membrane. This Homo sapiens (Human) protein is Small integral membrane protein 5 (SMIM5).